A 309-amino-acid chain; its full sequence is Putative G-protein coupled receptor B0244.4 (309 aa).

The next 6 helical transmembrane spans lie at Ser39–Leu59, Tyr82–Leu102, Ile114–Val134, Phe162–Ala182, Ile204–Leu224, and Trp256–Val276.

Belongs to the G-protein coupled receptor 1 family. B0244 subfamily.

Its subcellular location is the cell membrane. The sequence is that of Putative G-protein coupled receptor B0244.4 from Caenorhabditis elegans.